The following is a 554-amino-acid chain: Eukaryotic translation initiation factor 3 subunit D-2 (554 aa).

Positions glutamine 291–proline 305 are RNA gate. Residues asparagine 530 to asparagine 554 are disordered.

The protein belongs to the eIF-3 subunit D family. As to quaternary structure, component of the eukaryotic translation initiation factor 3 (eIF-3) complex. The eIF-3 complex interacts with pix.

The protein localises to the cytoplasm. MRNA cap-binding component of the eukaryotic translation initiation factor 3 (eIF-3) complex, which is involved in protein synthesis of a specialized repertoire of mRNAs and, together with other initiation factors, stimulates binding of mRNA and methionyl-tRNAi to the 40S ribosome. The eIF-3 complex specifically targets and initiates translation of a subset of mRNAs involved in cell proliferation. In the eIF-3 complex, eif3d specifically recognizes and binds the 7-methylguanosine cap of a subset of mRNAs. In Drosophila mojavensis (Fruit fly), this protein is Eukaryotic translation initiation factor 3 subunit D-2.